Consider the following 427-residue polypeptide: Light-independent protochlorophyllide reductase subunit N (427 aa).

Residues Cys29, Cys54, and Cys115 each coordinate [4Fe-4S] cluster.

It belongs to the BchN/ChlN family. In terms of assembly, protochlorophyllide reductase is composed of three subunits; BchL, BchN and BchB. Forms a heterotetramer of two BchB and two BchN subunits. It depends on [4Fe-4S] cluster as a cofactor.

The catalysed reaction is chlorophyllide a + oxidized 2[4Fe-4S]-[ferredoxin] + 2 ADP + 2 phosphate = protochlorophyllide a + reduced 2[4Fe-4S]-[ferredoxin] + 2 ATP + 2 H2O. Its pathway is porphyrin-containing compound metabolism; bacteriochlorophyll biosynthesis (light-independent). In terms of biological role, component of the dark-operative protochlorophyllide reductase (DPOR) that uses Mg-ATP and reduced ferredoxin to reduce ring D of protochlorophyllide (Pchlide) to form chlorophyllide a (Chlide). This reaction is light-independent. The NB-protein (BchN-BchB) is the catalytic component of the complex. In Bradyrhizobium sp. (strain ORS 278), this protein is Light-independent protochlorophyllide reductase subunit N.